We begin with the raw amino-acid sequence, 723 residues long: Envelope glycoprotein H (723 aa).

The N-terminal stretch at 1 to 23 is a signal peptide; it reads MSPATRFTVISCLVVSLITPSET. Residues 24 to 700 are Virion surface-facing; that stretch reads SSWFDPFIEW…IIDIRQTSIF (677 aa). 4 N-linked (GlcNAc...) asparagine; by host glycosylation sites follow: Asn-39, Asn-45, Asn-144, and Asn-174. An interaction with gL region spans residues 197–263; it reads HQFAIVLTFT…QSYRDDLLIV (67 aa). Residues Asn-270, Asn-340, Asn-411, Asn-543, Asn-621, and Asn-681 are each glycosylated (N-linked (GlcNAc...) asparagine; by host). A helical transmembrane segment spans residues 701 to 721; that stretch reads MIMLYCSLGVLLLYGLYRLLH. Residues 722–723 lie on the Intravirion side of the membrane; that stretch reads MI.

This sequence belongs to the herpesviridae glycoprotein H family. In terms of assembly, interacts with glycoprotein L (gL); this interaction is necessary for the correct processing and cell surface expression of gH. The heterodimer gH/gL seems to interact with gB trimers during fusion. N-glycosylated, O-glycosylated, and sialylated.

It is found in the virion membrane. The protein resides in the host cell membrane. Its subcellular location is the host endosome membrane. Functionally, the heterodimer glycoprotein H-glycoprotein L is required for the fusion of viral and plasma membranes leading to virus entry into the host cell. Following initial binding to host receptor, membrane fusion is mediated by the fusion machinery composed of gB and the heterodimer gH/gL. May also be involved in the fusion between the virion envelope and the outer nuclear membrane during virion morphogenesis. The protein is Envelope glycoprotein H of Guinea pig cytomegalovirus (strain 22122) (GPCMV).